A 475-amino-acid chain; its full sequence is Ribulose bisphosphate carboxylase large chain (475 aa).

The propeptide occupies 1–2 (MS). The residue at position 3 (Pro3) is an N-acetylproline. An N6,N6,N6-trimethyllysine modification is found at Lys14. Asn123 and Thr173 together coordinate substrate. Lys175 acts as the Proton acceptor in catalysis. Substrate is bound at residue Lys177. 3 residues coordinate Mg(2+): Lys201, Asp203, and Glu204. Position 201 is an N6-carboxylysine (Lys201). Catalysis depends on His294, which acts as the Proton acceptor. Substrate-binding residues include Arg295, His327, and Ser379.

It belongs to the RuBisCO large chain family. Type I subfamily. As to quaternary structure, heterohexadecamer of 8 large chains and 8 small chains; disulfide-linked. The disulfide link is formed within the large subunit homodimers. Requires Mg(2+) as cofactor. The disulfide bond which can form in the large chain dimeric partners within the hexadecamer appears to be associated with oxidative stress and protein turnover.

The protein resides in the plastid. It is found in the chloroplast. The enzyme catalyses 2 (2R)-3-phosphoglycerate + 2 H(+) = D-ribulose 1,5-bisphosphate + CO2 + H2O. It carries out the reaction D-ribulose 1,5-bisphosphate + O2 = 2-phosphoglycolate + (2R)-3-phosphoglycerate + 2 H(+). RuBisCO catalyzes two reactions: the carboxylation of D-ribulose 1,5-bisphosphate, the primary event in carbon dioxide fixation, as well as the oxidative fragmentation of the pentose substrate in the photorespiration process. Both reactions occur simultaneously and in competition at the same active site. This Physcomitrium patens (Spreading-leaved earth moss) protein is Ribulose bisphosphate carboxylase large chain.